Here is a 314-residue protein sequence, read N- to C-terminus: Tetraacyldisaccharide 4'-kinase (314 aa).

61-68 (IVGGSGKT) provides a ligand contact to ATP.

Belongs to the LpxK family.

It catalyses the reaction a lipid A disaccharide + ATP = a lipid IVA + ADP + H(+). Its pathway is glycolipid biosynthesis; lipid IV(A) biosynthesis; lipid IV(A) from (3R)-3-hydroxytetradecanoyl-[acyl-carrier-protein] and UDP-N-acetyl-alpha-D-glucosamine: step 6/6. In terms of biological role, transfers the gamma-phosphate of ATP to the 4'-position of a tetraacyldisaccharide 1-phosphate intermediate (termed DS-1-P) to form tetraacyldisaccharide 1,4'-bis-phosphate (lipid IVA). This Aliarcobacter butzleri (strain RM4018) (Arcobacter butzleri) protein is Tetraacyldisaccharide 4'-kinase.